The following is a 79-amino-acid chain: CDC42 small effector protein 1 (79 aa).

Residues cysteine 10 and cysteine 11 are each lipidated (S-palmitoyl cysteine). The CRIB domain maps to 30-43 (IGEPMNFVHLTHIG). A disordered region spans residues 48–79 (GAGDGLAMTGAVQEQMRSKGNRDRPWSNSRGL). Basic and acidic residues predominate over residues 63 to 72 (MRSKGNRDRP).

Belongs to the CDC42SE/SPEC family. As to quaternary structure, interacts with CDC42 (in GTP-bound form). Interacts weakly with RAC1 and not at all with RHOA.

The protein localises to the cytoplasm. Its subcellular location is the cytoskeleton. It localises to the cell membrane. Its function is as follows. Probably involved in the organization of the actin cytoskeleton by acting downstream of CDC42, inducing actin filament assembly. Alters CDC42-induced cell shape changes. In activated T-cells, may play a role in CDC42-mediated F-actin accumulation at the immunological synapse. May play a role in early contractile events in phagocytosis in macrophages. The chain is CDC42 small effector protein 1 (CDC42SE1) from Pongo abelii (Sumatran orangutan).